The primary structure comprises 545 residues: Glucose-6-phosphate isomerase (545 aa).

The active-site Proton donor is E351. Catalysis depends on residues H382 and K510.

The protein belongs to the GPI family.

It is found in the cytoplasm. The catalysed reaction is alpha-D-glucose 6-phosphate = beta-D-fructose 6-phosphate. Its pathway is carbohydrate biosynthesis; gluconeogenesis. It functions in the pathway carbohydrate degradation; glycolysis; D-glyceraldehyde 3-phosphate and glycerone phosphate from D-glucose: step 2/4. Catalyzes the reversible isomerization of glucose-6-phosphate to fructose-6-phosphate. In Shewanella halifaxensis (strain HAW-EB4), this protein is Glucose-6-phosphate isomerase.